A 568-amino-acid chain; its full sequence is Urease subunit alpha (568 aa).

The region spanning 130–568 (GGIDTHIHFI…LPMAQRYFLF (439 aa)) is the Urease domain. Ni(2+)-binding residues include H135, H137, and K218. At K218 the chain carries N6-carboxylysine. A substrate-binding site is contributed by H220. Residues H247 and H273 each contribute to the Ni(2+) site. H321 acts as the Proton donor in catalysis. D361 is a binding site for Ni(2+).

This sequence belongs to the metallo-dependent hydrolases superfamily. Urease alpha subunit family. As to quaternary structure, heterotrimer of UreA (gamma), UreB (beta) and UreC (alpha) subunits. Three heterotrimers associate to form the active enzyme. It depends on Ni cation as a cofactor. Carboxylation allows a single lysine to coordinate two nickel ions.

It is found in the cytoplasm. The catalysed reaction is urea + 2 H2O + H(+) = hydrogencarbonate + 2 NH4(+). It participates in nitrogen metabolism; urea degradation; CO(2) and NH(3) from urea (urease route): step 1/1. The sequence is that of Urease subunit alpha from Burkholderia cenocepacia (strain ATCC BAA-245 / DSM 16553 / LMG 16656 / NCTC 13227 / J2315 / CF5610) (Burkholderia cepacia (strain J2315)).